A 118-amino-acid polypeptide reads, in one-letter code: V-type proton ATPase subunit F (118 aa).

The protein belongs to the V-ATPase F subunit family. V-ATPase is a heteromultimeric enzyme composed of a peripheral catalytic V1 complex (components A to H) attached to an integral membrane V0 proton pore complex (components: a, c, c', c'', d, e, f and VOA1).

It is found in the vacuole membrane. Its function is as follows. Subunit of the V1 complex of vacuolar(H+)-ATPase (V-ATPase), a multisubunit enzyme composed of a peripheral complex (V1) that hydrolyzes ATP and a membrane integral complex (V0) that translocates protons. V-ATPase is responsible for acidifying and maintaining the pH of intracellular compartments. This Saccharomyces cerevisiae (strain ATCC 204508 / S288c) (Baker's yeast) protein is V-type proton ATPase subunit F.